The chain runs to 266 residues: Glucosamine-6-phosphate deaminase (266 aa).

Asp72 functions as the Proton acceptor; for enolization step in the catalytic mechanism. The active-site For ring-opening step is the Asp141. The Proton acceptor; for ring-opening step role is filled by His143. Glu148 functions as the For ring-opening step in the catalytic mechanism.

Belongs to the glucosamine/galactosamine-6-phosphate isomerase family. NagB subfamily. In terms of assembly, homohexamer.

It carries out the reaction alpha-D-glucosamine 6-phosphate + H2O = beta-D-fructose 6-phosphate + NH4(+). It participates in amino-sugar metabolism; N-acetylneuraminate degradation; D-fructose 6-phosphate from N-acetylneuraminate: step 5/5. With respect to regulation, allosterically activated by N-acetylglucosamine 6-phosphate (GlcNAc6P). In terms of biological role, catalyzes the reversible isomerization-deamination of glucosamine 6-phosphate (GlcN6P) to form fructose 6-phosphate (Fru6P) and ammonium ion. This is Glucosamine-6-phosphate deaminase from Aeromonas hydrophila subsp. hydrophila (strain ATCC 7966 / DSM 30187 / BCRC 13018 / CCUG 14551 / JCM 1027 / KCTC 2358 / NCIMB 9240 / NCTC 8049).